A 71-amino-acid polypeptide reads, in one-letter code: Keratin-associated protein 6-1 (71 aa).

Belongs to the KRTAP type 6 family. As to quaternary structure, interacts with hair keratins.

Functionally, in the hair cortex, hair keratin intermediate filaments are embedded in an interfilamentous matrix, consisting of hair keratin-associated proteins (KRTAP), which are essential for the formation of a rigid and resistant hair shaft through their extensive disulfide bond cross-linking with abundant cysteine residues of hair keratins. The matrix proteins include the high-sulfur and high-glycine-tyrosine keratins. In Homo sapiens (Human), this protein is Keratin-associated protein 6-1 (KRTAP6-1).